Reading from the N-terminus, the 187-residue chain is Calcium and integrin-binding family member 2 (187 aa).

EF-hand domains follow at residues 66 to 101 (RENPFKERIVEAFSEDGEGNLTFNDFVDMFSVLCES), 103 to 138 (PRELKANYAFKIYDFNTDNFICKEDLELTLARLTKS), and 144 to 179 (EVVLVCDKVIEEADLDGDGKLGFADFEDMIAKAPDF). The Ca(2+) site is built by D116, N118, D120, D127, D157, D159, D161, K163, and D168.

In terms of assembly, monomer. Homodimer. Interacts with WHRN and MYO7A. Interacts with ITGA2B (via C-terminus cytoplasmic tail region); the interactions are stabilized/increased in a calcium and magnesium-dependent manner. Interacts with ITGA7 (via C-terminus cytoplasmic tail region); the interactions are stabilized/increased in a calcium and magnesium-dependent manner. Interacts with TMC1. Interacts with TMC2.

Its subcellular location is the cytoplasm. It localises to the cell projection. It is found in the stereocilium. The protein resides in the photoreceptor inner segment. The protein localises to the cilium. Its subcellular location is the photoreceptor outer segment. It localises to the cell membrane. It is found in the sarcolemma. Functionally, calcium- and integrin-binding protein that plays a role in intracellular calcium homeostasis. Acts as an auxiliary subunit of the sensory mechanoelectrical transduction (MET) channel in hair cells. Essential for mechanoelectrical transduction (MET) currents in auditory hair cells and thereby required for hearing. Regulates the function of hair cell mechanotransduction by controlling the distribution of transmembrane channel-like proteins TMC1 and TMC2, and by regulating the function of the MET channels in hair cells. Required for the maintenance of auditory hair cell stereocilia bundle morphology and function and for hair-cell survival in the cochlea. Critical for proper photoreceptor cell maintenance and function. Plays a role in intracellular calcium homeostasis by decreasing ATP-induced calcium release. This Rattus norvegicus (Rat) protein is Calcium and integrin-binding family member 2 (Cib2).